Here is a 51-residue protein sequence, read N- to C-terminus: Lantibiotic lacticin-481 (51 aa).

A propeptide spanning residues 1-24 is cleaved from the precursor; sequence MKEQNSFNLLQEVTESELDLILGA. Residues 33–38 constitute a cross-link (beta-methyllanthionine (Thr-Cys)); that stretch reads TISHEC. 2 consecutive cross-links (lanthionine (Ser-Cys)) follow at residues 35-49 and 42-50; these read SHEC…VFTC and SWQFVFTCC. T48 carries the post-translational modification (Z)-2,3-didehydrobutyrine.

This sequence belongs to the type A lantibiotic family. In terms of assembly, monomer or homodimer. In terms of processing, maturation of lantibiotics involves the enzymatic conversion of Thr, and Ser into dehydrated AA and the formation of thioether bonds with cysteine. This is followed by membrane translocation and cleavage of the modified precursor. Post-translationally, it is established that the 2,3-didehydrobutyrine is the Z-isomer.

Lanthionine-containing peptide antibiotic (lantibiotic) active on Gram-positive bacteria. The bactericidal activity of lantibiotics is based on depolarization of energized bacterial cytoplasmic membranes, initiated by the formation of aqueous transmembrane pores. Lacticin 481 is a broad spectrum bacteriocin exhibiting activity against a wide range of lactic acid bacteria and C.tyrobutyricum. The protein is Lantibiotic lacticin-481 (lctA) of Lactococcus lactis subsp. lactis (Streptococcus lactis).